Here is a 405-residue protein sequence, read N- to C-terminus: S-adenosylmethionine synthase (405 aa).

Position 22 (histidine 22) interacts with ATP. Aspartate 24 contacts Mg(2+). Glutamate 50 provides a ligand contact to K(+). L-methionine contacts are provided by glutamate 63 and glutamine 107. The flexible loop stretch occupies residues 107–117; that stretch reads QSPDIAQGVDR. Residues 184-186, 250-251, aspartate 259, 265-266, alanine 282, and lysine 286 contribute to the ATP site; these read DGK, RF, and RK. Aspartate 259 contributes to the L-methionine binding site. Lysine 290 contributes to the L-methionine binding site.

This sequence belongs to the AdoMet synthase family. Homotetramer; dimer of dimers. Mg(2+) is required as a cofactor. It depends on K(+) as a cofactor.

The protein localises to the cytoplasm. It catalyses the reaction L-methionine + ATP + H2O = S-adenosyl-L-methionine + phosphate + diphosphate. The protein operates within amino-acid biosynthesis; S-adenosyl-L-methionine biosynthesis; S-adenosyl-L-methionine from L-methionine: step 1/1. Catalyzes the formation of S-adenosylmethionine (AdoMet) from methionine and ATP. The overall synthetic reaction is composed of two sequential steps, AdoMet formation and the subsequent tripolyphosphate hydrolysis which occurs prior to release of AdoMet from the enzyme. The sequence is that of S-adenosylmethionine synthase from Roseiflexus sp. (strain RS-1).